Reading from the N-terminus, the 142-residue chain is Large ribosomal subunit protein uL11 (142 aa).

The protein belongs to the universal ribosomal protein uL11 family. In terms of assembly, part of the ribosomal stalk of the 50S ribosomal subunit. Interacts with L10 and the large rRNA to form the base of the stalk. L10 forms an elongated spine to which L12 dimers bind in a sequential fashion forming a multimeric L10(L12)X complex. One or more lysine residues are methylated.

In terms of biological role, forms part of the ribosomal stalk which helps the ribosome interact with GTP-bound translation factors. This Methylocella silvestris (strain DSM 15510 / CIP 108128 / LMG 27833 / NCIMB 13906 / BL2) protein is Large ribosomal subunit protein uL11.